The primary structure comprises 432 residues: GTPase Obg (432 aa).

Positions 1–158 (MFVDQIKIEV…RKLKLELKVL (158 aa)) constitute an Obg domain. Residues 159–335 (ADVGLVGFPS…LTHRTADVLE (177 aa)) enclose the OBG-type G domain. GTP is bound by residues 165–172 (GFPSVGKS), 190–194 (FTTLV), 212–215 (DLPG), 282–285 (SKMD), and 316–318 (SSL). Residues serine 172 and threonine 192 each coordinate Mg(2+). An OCT domain is found at 354–432 (TFKEDEPAFK…IEDFTFEFVE (79 aa)).

This sequence belongs to the TRAFAC class OBG-HflX-like GTPase superfamily. OBG GTPase family. As to quaternary structure, monomer. Mg(2+) serves as cofactor.

The protein resides in the cytoplasm. An essential GTPase which binds GTP, GDP and possibly (p)ppGpp with moderate affinity, with high nucleotide exchange rates and a fairly low GTP hydrolysis rate. Plays a role in control of the cell cycle, stress response, ribosome biogenesis and in those bacteria that undergo differentiation, in morphogenesis control. This is GTPase Obg from Ligilactobacillus salivarius (strain UCC118) (Lactobacillus salivarius).